The chain runs to 339 residues: Zinc metalloprotease MJ0392 (339 aa).

Transmembrane regions (helical) follow at residues 10 to 30 (IMGI…VIIG) and 33 to 53 (IMNN…SVVL). His-54 is a Zn(2+) binding site. Glu-55 is an active-site residue. Residue His-58 coordinates Zn(2+). The next 2 membrane-spanning stretches (helical) occupy residues 96-116 (IAGP…SQFF) and 125-145 (LLYT…IPAF). Asp-148 serves as a coordination point for Zn(2+). Helical transmembrane passes span 180–200 (IMLL…SLFV) and 251–271 (YFGY…IGNI). CBS domains are found at residues 226–281 (MTPN…VRDY) and 281–335 (YMEK…ELKE).

The protein belongs to the peptidase M50B family. In terms of assembly, monomer. The cofactor is Zn(2+).

Its subcellular location is the cell membrane. With respect to regulation, inhibited by 1,10-phenanthroline. Functionally, a site-2 regulated intramembrane protease (S2P) that cleaves type-2 transmembrane proteins within their membrane-spanning domains; its endogenous substrate is unknown. Regulated intramembrane proteolysis (RIP) occurs when an extracytoplasmic signal triggers a concerted proteolytic cascade to transmit information and elicit cellular responses. A membrane-spanning regulatory substrate protein is first cut extracytoplasmically (site-1 protease, S1P), then within the membrane itself (site-2 protease, S2P, this enzyme), while cytoplasmic proteases finish degrading the regulatory protein, liberating the effector protein. Possible signals, S1P and substrates are unknown in this organism. The sequence is that of Zinc metalloprotease MJ0392 from Methanocaldococcus jannaschii (strain ATCC 43067 / DSM 2661 / JAL-1 / JCM 10045 / NBRC 100440) (Methanococcus jannaschii).